Reading from the N-terminus, the 131-residue chain is Type-5 thionin (131 aa).

The N-terminal stretch at 1–29 (MGGGQKGLESAIVCLLVLGLVLEQVQVEG) is a signal peptide. Residues 67-131 (LASVRSSDEP…GDTLLASLDD (65 aa)) constitute a propeptide, acidic domain.

The protein belongs to the plant thionin (TC 1.C.44) family. In terms of processing, is disulfide-linked. Developing endosperm.

Its subcellular location is the secreted. In terms of biological role, thionins are small plant proteins which are toxic to animal cells. They seem to exert their toxic effect at the level of the cell membrane. Their precise function is not known. This chain is Type-5 thionin (TTHV), found in Triticum aestivum (Wheat).